The primary structure comprises 519 residues: T-box transcription factor TBX5 (519 aa).

Positions 1–43 are disordered; the sequence is MADTEEAYGMPDTPVEAEPKELQCEPKQDNQMGASSKTPTSPQ. Over residues 17–28 the composition is skewed to basic and acidic residues; it reads AEPKELQCEPKQ. Positions 29–43 are enriched in polar residues; that stretch reads DNQMGASSKTPTSPQ. Positions 63 to 238 form a DNA-binding region, T-box; that stretch reads LWLKFHEVGT…NNPFAKGFRG (176 aa). Disordered stretches follow at residues 254-312 and 335-376; these read EYPV…SAYP and ELSY…TESA. A compositionally biased stretch (polar residues) spans 262-303; the sequence is TVRQKVSSNHSPFSQETRNITGSSTLNSQYQCENGVSSTSQD.

Monomer. Homodimer (via the T-box); binds DNA as homodimer.

Its subcellular location is the nucleus. It localises to the cytoplasm. DNA-binding protein that regulates the transcription of several genes and is involved in heart development and limb pattern formation. May bind to the core DNA motif of promoters. In Xenopus tropicalis (Western clawed frog), this protein is T-box transcription factor TBX5 (tbx5).